Consider the following 443-residue polypeptide: Glycerol-3-phosphate acyltransferase 3-like (443 aa).

3 helical membrane passes run 15-35 (WFSC…SLGI), 146-166 (ISLR…CILL), and 170-190 (ITLT…VGFL). An HXXXXD motif motif is present at residues 238–243 (HTSPID). A helical membrane pass occupies residues 358–378 (IMSYLLRMMTSWAIVCNVWYL).

It belongs to the 1-acyl-sn-glycerol-3-phosphate acyltransferase family.

It localises to the endoplasmic reticulum membrane. The catalysed reaction is sn-glycerol 3-phosphate + an acyl-CoA = a 1-acyl-sn-glycero-3-phosphate + CoA. It catalyses the reaction a 1-acyl-sn-glycero-3-phosphate + an acyl-CoA = a 1,2-diacyl-sn-glycero-3-phosphate + CoA. It participates in glycerolipid metabolism; triacylglycerol biosynthesis. It functions in the pathway phospholipid metabolism; CDP-diacylglycerol biosynthesis; CDP-diacylglycerol from sn-glycerol 3-phosphate: step 1/3. Functionally, may transfer the acyl-group from acyl-coA to the sn-1 position of glycerol-3-phosphate, an essential step in glycerolipid biosynthesis. Also transfers the acyl-group from acyl-coA to the sn-2 position of 1-acyl-sn-glycerol-3-phosphate (lysophosphatidic acid, or LPA), forming 1,2-diacyl-sn-glycerol-3-phosphate (phosphatidic acid, or PA). This Danio rerio (Zebrafish) protein is Glycerol-3-phosphate acyltransferase 3-like (agpat9l).